A 208-amino-acid polypeptide reads, in one-letter code: Ribosomal RNA small subunit methyltransferase G (208 aa).

Residues Gly75, Leu80, Val126 to Glu127, and Arg141 each bind S-adenosyl-L-methionine.

Belongs to the methyltransferase superfamily. RNA methyltransferase RsmG family.

It localises to the cytoplasm. The catalysed reaction is guanosine(527) in 16S rRNA + S-adenosyl-L-methionine = N(7)-methylguanosine(527) in 16S rRNA + S-adenosyl-L-homocysteine. In terms of biological role, specifically methylates the N7 position of guanine in position 527 of 16S rRNA. This is Ribosomal RNA small subunit methyltransferase G from Marinomonas sp. (strain MWYL1).